The chain runs to 142 residues: Hemoglobin subunit alpha (142 aa).

The Globin domain occupies 2-142; sequence VLSPADKSNV…VSTVLTSKYR (141 aa). Phosphoserine is present on serine 4. Residues lysine 8 and lysine 12 each carry the N6-succinyllysine modification. Lysine 17 is modified (N6-acetyllysine; alternate). Lysine 17 carries the N6-succinyllysine; alternate modification. Tyrosine 25 bears the Phosphotyrosine mark. The residue at position 36 (serine 36) is a Phosphoserine. Lysine 41 carries the post-translational modification N6-succinyllysine. A Phosphoserine modification is found at serine 50. Residue histidine 59 coordinates O2. Histidine 88 is a heme b binding site. At serine 103 the chain carries Phosphoserine. A Phosphothreonine modification is found at threonine 109. Residue serine 125 is modified to Phosphoserine. A phosphothreonine mark is found at threonine 135 and threonine 138. Serine 139 is subject to Phosphoserine.

Belongs to the globin family. As to quaternary structure, heterotetramer of two alpha chains and two beta chains. As to expression, red blood cells.

Functionally, involved in oxygen transport from the lung to the various peripheral tissues. In terms of biological role, hemopressin acts as an antagonist peptide of the cannabinoid receptor CNR1. Hemopressin-binding efficiently blocks cannabinoid receptor CNR1 and subsequent signaling. This chain is Hemoglobin subunit alpha (HBA), found in Ursus maritimus (Polar bear).